Reading from the N-terminus, the 44-residue chain is Cytochrome b559 subunit beta (44 aa).

A helical transmembrane segment spans residues 19–35 (WLSVHALGVPSVFFLGA). H23 serves as a coordination point for heme.

This sequence belongs to the PsbE/PsbF family. As to quaternary structure, heterodimer of an alpha subunit and a beta subunit. PSII is composed of 1 copy each of membrane proteins PsbA, PsbB, PsbC, PsbD, PsbE, PsbF, PsbH, PsbI, PsbJ, PsbK, PsbL, PsbM, PsbT, PsbX, PsbY, PsbZ, Psb30/Ycf12, peripheral proteins PsbO, CyanoQ (PsbQ), PsbU, PsbV and a large number of cofactors. It forms dimeric complexes. The cofactor is heme b.

The protein resides in the cellular thylakoid membrane. Its function is as follows. This b-type cytochrome is tightly associated with the reaction center of photosystem II (PSII). PSII is a light-driven water:plastoquinone oxidoreductase that uses light energy to abstract electrons from H(2)O, generating O(2) and a proton gradient subsequently used for ATP formation. It consists of a core antenna complex that captures photons, and an electron transfer chain that converts photonic excitation into a charge separation. This chain is Cytochrome b559 subunit beta, found in Synechococcus elongatus (strain ATCC 33912 / PCC 7942 / FACHB-805) (Anacystis nidulans R2).